The chain runs to 401 residues: Arylacetamide deacetylase-like 2 (401 aa).

The first 18 residues, 1–18 (MGLKALCLGLLCVLFVSH), serve as a signal peptide directing secretion. The Involved in the stabilization of the negatively charged intermediate by the formation of the oxyanion hole motif lies at 111 to 113 (HGG). A disulfide bridge links Cys-116 with Cys-338. Residues Ser-189, Asp-341, and His-371 contribute to the active site.

This sequence belongs to the 'GDXG' lipolytic enzyme family.

The protein resides in the secreted. The polypeptide is Arylacetamide deacetylase-like 2 (AADACL2) (Homo sapiens (Human)).